The sequence spans 311 residues: Putative F-box protein At3g28280 (311 aa).

An F-box domain is found at 1–43 (MNSLPEDLLAMILVKLPIKIFTTFKIVCTQWESMVDSPYFRDL).

The sequence is that of Putative F-box protein At3g28280 from Arabidopsis thaliana (Mouse-ear cress).